The chain runs to 203 residues: Urease accessory protein UreG (203 aa).

13 to 20 (GPVGSGKT) is a binding site for GTP.

This sequence belongs to the SIMIBI class G3E GTPase family. UreG subfamily. In terms of assembly, homodimer. UreD, UreF and UreG form a complex that acts as a GTP-hydrolysis-dependent molecular chaperone, activating the urease apoprotein by helping to assemble the nickel containing metallocenter of UreC. The UreE protein probably delivers the nickel.

Its subcellular location is the cytoplasm. In terms of biological role, facilitates the functional incorporation of the urease nickel metallocenter. This process requires GTP hydrolysis, probably effectuated by UreG. The polypeptide is Urease accessory protein UreG (Psychromonas ingrahamii (strain DSM 17664 / CCUG 51855 / 37)).